The primary structure comprises 51 residues: Large ribosomal subunit protein bL33 (51 aa).

This sequence belongs to the bacterial ribosomal protein bL33 family.

This is Large ribosomal subunit protein bL33 from Pseudoalteromonas atlantica (strain T6c / ATCC BAA-1087).